The following is a 241-amino-acid chain: DNA repair protein RecO (241 aa).

This sequence belongs to the RecO family.

Involved in DNA repair and RecF pathway recombination. The chain is DNA repair protein RecO from Yersinia pseudotuberculosis serotype O:1b (strain IP 31758).